We begin with the raw amino-acid sequence, 363 residues long: MSDTPPDYPTLQSIGWPWPGPPEEAAWQAIFAAHPQALPARVVEQHRTGYVAADTPQASVKAESLPEWQRPRFPSHERAAVGDWVLMEGKRIVALLPRRTSIKRGAAGEHYHQQVIAANIDTVFIVCGLDADFNPRRIERYLLLVGGGGAQPVVVLTKADQTEYAEDALAVLEELEAQNIPLRAVNAKDPDSVAALRPWLGDGRTAVLVGSSGAGKSTLTNTLLGTQKMKTNAVRENDSRGRHTTTHRALIPLPSGACLIDTPGMRELKPTGEEDLAEGGFSDVEALAAQCRFNDCAHIAEPGCAVRAAIDAGELDPERVANYMKLRVEVASAAEKLATRVAQNNRGKGSGKRPASVDRPGRR.

The CP-type G domain maps to 112-268; the sequence is HQQVIAANID…LIDTPGMREL (157 aa). Residues 157–160 and 210–218 each bind GTP; these read TKAD and GSSGAGKST. Zn(2+)-binding residues include Cys291, Cys296, His298, and Cys304. The tract at residues 340–363 is disordered; the sequence is RVAQNNRGKGSGKRPASVDRPGRR.

This sequence belongs to the TRAFAC class YlqF/YawG GTPase family. RsgA subfamily. In terms of assembly, monomer. Associates with 30S ribosomal subunit, binds 16S rRNA. Zn(2+) is required as a cofactor.

Its subcellular location is the cytoplasm. In terms of biological role, one of several proteins that assist in the late maturation steps of the functional core of the 30S ribosomal subunit. Helps release RbfA from mature subunits. May play a role in the assembly of ribosomal proteins into the subunit. Circularly permuted GTPase that catalyzes slow GTP hydrolysis, GTPase activity is stimulated by the 30S ribosomal subunit. This is Small ribosomal subunit biogenesis GTPase RsgA from Xanthomonas euvesicatoria pv. vesicatoria (strain 85-10) (Xanthomonas campestris pv. vesicatoria).